A 1027-amino-acid chain; its full sequence is Multidrug resistance protein MdtC (1027 aa).

A run of 12 helical transmembrane segments spans residues 16–36, 333–353, 360–380, 387–407, 431–451, 463–483, 528–548, 853–873, 875–895, 897–917, 953–973, and 984–1004; these read LLSL…PVAP, EVER…FLFL, LIPA…MYLC, LSLM…IVVL, VGFT…PLLL, FAIT…TLTP, WIMA…ISAP, LILI…LYES, IHPL…LLAL, LFDT…IGIV, PIIM…LSSG, and ITIV…TPII.

The protein belongs to the resistance-nodulation-cell division (RND) (TC 2.A.6) family. MdtC subfamily. Part of a tripartite efflux system composed of MdtA, MdtB and MdtC. MdtC forms a heteromultimer with MdtB.

The protein localises to the cell inner membrane. This chain is Multidrug resistance protein MdtC, found in Proteus mirabilis (strain HI4320).